The following is a 245-amino-acid chain: Flavin mononucleotide hydrolase 1, chloroplatic (245 aa).

The transit peptide at 1 to 26 (MAAAAMHTSAEFINLKPNMWKKNPVR) directs the protein to the chloroplast.

This sequence belongs to the HAD-like hydrolase superfamily. DOG/GPP family. As to quaternary structure, homodimer. Requires Mg(2+) as cofactor.

It is found in the plastid. It localises to the chloroplast stroma. It carries out the reaction FMN + H2O = riboflavin + phosphate. It catalyses the reaction 5-amino-6-(5-phospho-D-ribitylamino)uracil + H2O = 5-amino-6-(D-ribitylamino)uracil + phosphate. Its function is as follows. FMN hydrolase that catalyzes the dephosphorylation of flavin mononucleotide (FMN) to riboflavin. Can also dephosphorylate 5-amino-6-(5-phospho-D-ribitylamino)uracil, also known as ARPP. Not required for riboflavin biosynthesis in planta, but may help maintaining flavin homeostasis within chloroplasts. The polypeptide is Flavin mononucleotide hydrolase 1, chloroplatic (Arabidopsis thaliana (Mouse-ear cress)).